A 188-amino-acid chain; its full sequence is Putative CC-type chemokine FPV060 (188 aa).

It belongs to the intercrine beta (chemokine CC) family. Highly divergent.

The sequence is that of Putative CC-type chemokine FPV060 from Fowlpox virus (strain NVSL) (FPV).